Here is a 216-residue protein sequence, read N- to C-terminus: MAMTEESVDQVEVNCLCVQHGQSCNNTRCFVKEGLRANWFYNPVLEEFAIPDSYQEGHGVNVKITFSHRSRNTGQIPLCLSNGTCHISEKGLHFSANFSKDGLYIAIINETNYHAAEHYYLVYIYENCHQMPYDSPRHTGHNGTSFNWSMGLWLVKCSHNKTFFLPFVLDSAKSAPIIMTETAITIYISMIFLIVSLLTFLNVLITLNNKYKHYGV.

N-linked (GlcNAc...) asparagine; by host glycans are attached at residues asparagine 25, asparagine 82, asparagine 97, asparagine 109, asparagine 142, asparagine 147, and asparagine 160.

This is Early E3 25 kDa glycoprotein from Canis lupus familiaris (Dog).